A 429-amino-acid polypeptide reads, in one-letter code: Multifunctional CCA protein (429 aa).

Residues G27 and R30 each coordinate ATP. Residues G27 and R30 each contribute to the CTP site. 2 residues coordinate Mg(2+): D40 and D42. ATP-binding residues include R110, R162, and R165. CTP is bound by residues R110, R162, and R165. The region spanning T251–L352 is the HD domain.

The protein belongs to the tRNA nucleotidyltransferase/poly(A) polymerase family. Bacterial CCA-adding enzyme type 1 subfamily. As to quaternary structure, monomer. Can also form homodimers and oligomers. Requires Mg(2+) as cofactor. Ni(2+) serves as cofactor.

It carries out the reaction a tRNA precursor + 2 CTP + ATP = a tRNA with a 3' CCA end + 3 diphosphate. The catalysed reaction is a tRNA with a 3' CCA end + 2 CTP + ATP = a tRNA with a 3' CCACCA end + 3 diphosphate. In terms of biological role, catalyzes the addition and repair of the essential 3'-terminal CCA sequence in tRNAs without using a nucleic acid template. Adds these three nucleotides in the order of C, C, and A to the tRNA nucleotide-73, using CTP and ATP as substrates and producing inorganic pyrophosphate. tRNA 3'-terminal CCA addition is required both for tRNA processing and repair. Also involved in tRNA surveillance by mediating tandem CCA addition to generate a CCACCA at the 3' terminus of unstable tRNAs. While stable tRNAs receive only 3'-terminal CCA, unstable tRNAs are marked with CCACCA and rapidly degraded. The protein is Multifunctional CCA protein of Ralstonia nicotianae (strain ATCC BAA-1114 / GMI1000) (Ralstonia solanacearum).